A 266-amino-acid polypeptide reads, in one-letter code: Proteasome subunit alpha type-1 (266 aa).

The protein belongs to the peptidase T1A family. As to quaternary structure, the 26S proteasome consists of a 20S proteasome core and two 19S regulatory subunits. The 20S proteasome core is composed of 28 subunits that are arranged in four stacked rings, resulting in a barrel-shaped structure. The two end rings are each formed by seven alpha subunits, and the two central rings are each formed by seven beta subunits. The catalytic chamber with the active sites is on the inside of the barrel.

The protein localises to the cytoplasm. It localises to the nucleus. Its function is as follows. The proteasome is a multicatalytic proteinase complex which is characterized by its ability to cleave peptides with Arg, Phe, Tyr, Leu, and Glu adjacent to the leaving group at neutral or slightly basic pH. The proteasome has an ATP-dependent proteolytic activity. This Trypanosoma brucei brucei protein is Proteasome subunit alpha type-1.